Reading from the N-terminus, the 189-residue chain is dCTP deaminase (189 aa).

Residues 112–117, 136–138, Q157, Y171, and Q181 each bind dCTP; these read KSTYAR and TLE. The active-site Proton donor/acceptor is the E138.

This sequence belongs to the dCTP deaminase family. Homotrimer.

It catalyses the reaction dCTP + H2O + H(+) = dUTP + NH4(+). Its pathway is pyrimidine metabolism; dUMP biosynthesis; dUMP from dCTP (dUTP route): step 1/2. Its function is as follows. Catalyzes the deamination of dCTP to dUTP. The sequence is that of dCTP deaminase from Nitrosospira multiformis (strain ATCC 25196 / NCIMB 11849 / C 71).